Reading from the N-terminus, the 254-residue chain is Uridylate kinase (254 aa).

Residue 9–12 (KLSG) participates in ATP binding. Residue Gly51 participates in UMP binding. The ATP site is built by Gly52 and Arg56. UMP-binding positions include Asp72 and 133-140 (SGNPFFTT). Thr160, Tyr166, and Asp169 together coordinate ATP.

This sequence belongs to the UMP kinase family. In terms of assembly, homohexamer.

Its subcellular location is the cytoplasm. The catalysed reaction is UMP + ATP = UDP + ADP. It functions in the pathway pyrimidine metabolism; CTP biosynthesis via de novo pathway; UDP from UMP (UMPK route): step 1/1. With respect to regulation, inhibited by UTP. Its function is as follows. Catalyzes the reversible phosphorylation of UMP to UDP. This chain is Uridylate kinase, found in Synechococcus sp. (strain JA-3-3Ab) (Cyanobacteria bacterium Yellowstone A-Prime).